The chain runs to 864 residues: MHERYVPADVEAAAQGDWRAADAYKTKEDSQKPKFYCVSMLPYPSGKLHMGHVRNYTINDVMYRYLRMNGYNTLMPMGWDAFGMPAENAAMANGVPPAKWTYDNIDYMKGQMQSMGLAIDWSREIATCKPDYYKWNQWLFLKMLEKGIAYKKTGTVNWDPVDQTVLANEQVIDGRGWRSGALVEKREIPMYYLRITQYADELLNDLDGLGWPERVKIMQQNWIGKSFGVNFGFPYELDGEQKLLRVFTTRADTIMGVTFCAIAAEHPLATRLAQDKPELLAFIEECKRGGVAEADVATMEKKGVATGFSVKHPLTGEPVEVWIGNYVLMSYGEGAVMGVPGHDERDFAFAKKYDLPIRQVIASEGQTYSLDAWQEWYGDKETAVCVNSGKYDGLRYAEAVDAVAADLKAGGFGDKQVTWRLRDWGVSRQRYWGTPIPIIHCPSCGDVPVPEQDLPVVLPEDLVPDGSGNPLAKSEAFLNCTCPKCGAAAKRETDTMDTFVDSSWYFSRYTAPDAETMVDARTDYWMPMDQYIGGIEHAILHLLYSRFWTKVMRDLGLVKFGEPAKNLLTQGMVLNETYYREDAAGKKTWYNPLDVTVTHDDKGRPVGATLNADGQPVVLGGIEKMSKSKNNGVDPQLLIDQYGADTARLFTMFAAPPEQQLEWSGAGVEGASRFLRRVWSFGYGNREALAARAGFDAATLGDADKALRREIYSVLKQADFDYQRLQYNTVVSAAMKMLNAIDGAKGATPAVLRETYGVLLRVLYPVVPHVTFELWKTLGYADEFGALLDAPWPKVDEAALEQAEIELVLQVNGKVRGALKVAKDASRDAIEAAAVADEAFAKFSDGKPAKKIVVVPGRLVNIVV.

A 'HIGH' region motif is present at residues 42 to 52 (PYPSGKLHMGH). The short motif at 624 to 628 (KMSKS) is the 'KMSKS' region element. K627 is an ATP binding site.

The protein belongs to the class-I aminoacyl-tRNA synthetase family.

The protein resides in the cytoplasm. The enzyme catalyses tRNA(Leu) + L-leucine + ATP = L-leucyl-tRNA(Leu) + AMP + diphosphate. This chain is Leucine--tRNA ligase, found in Burkholderia cenocepacia (strain HI2424).